Reading from the N-terminus, the 425-residue chain is L-lysine N6-monooxygenase (425 aa).

Residue 8 to 14 (IGVGTGP) participates in FAD binding.

This sequence belongs to the lysine N(6)-hydroxylase/L-ornithine N(5)-oxygenase family. FAD serves as cofactor.

It is found in the cytoplasm. It localises to the cell membrane. It carries out the reaction L-lysine + NADPH + O2 = N(6)-hydroxy-L-lysine + NADP(+) + H2O. Its pathway is siderophore biosynthesis; aerobactin biosynthesis. Its function is as follows. Flavoprotein monooxygenase required for N-hydroxylation of lysine. Involved in the biosynthesis of the siderophore aerobactin which is a chelator that mediates the high-affinity iron transport systems induced by the organism under iron-stressed conditions. The chain is L-lysine N6-monooxygenase from Escherichia coli.